A 149-amino-acid polypeptide reads, in one-letter code: Calmodulin (149 aa).

Ala2 carries the N-acetylalanine modification. EF-hand domains lie at 8-43, 44-79, 81-116, and 117-149; these read EQIA…LGQN, PTEA…KMKD, DSEE…LGEK, and LTDE…MLAK. Asp21, Asp23, Asp25, Cys27, Glu32, Asp57, Asp59, Asn61, Thr63, Glu68, Asp94, Asp96, Asn98, and Glu105 together coordinate Ca(2+). An N6,N6,N6-trimethyllysine modification is found at Lys116. Residues Asp130, Asp132, Asp134, Gln136, and Glu141 each coordinate Ca(2+).

It belongs to the calmodulin family.

Functionally, calmodulin mediates the control of a large number of enzymes, ion channels and other proteins by Ca(2+). Among the enzymes to be stimulated by the calmodulin-Ca(2+) complex are a number of protein kinases and phosphatases. This Solanum lycopersicum (Tomato) protein is Calmodulin (CALM1).